The sequence spans 4558 residues: Multifunctional-autoprocessing repeats-in-toxin (4558 aa).

The first 32 residues, M1–A32, serve as a signal peptide directing secretion. 39 RtxA repeats span residues G114–S131, G134–T151, G154–L170, G174–T197, G200–T217, G220–T237, G268–H285, G288–F304, G594–H611, G614–T630, G634–T651, G654–G668, A751–G763, M769–N781, A792–L808, M811–T826, M830–T845, G851–L865, M868–A885, M887–N901, M906–D920, M925–A942, M944–L960, M982–N994, M1001–S1016, G1041–L1053, A1077–D1089, A1097–V1112, G1120–I1132, A1135–N1152, W1155–R1169, A1173–V1189, G1194–T1209, A1211–V1227, A1230–F1246, K1252–T1266, A1268–T1285, A1306–A1323, and M1325–N1342. Disordered regions lie at residues H1623–S1688, T1752–A1779, and D1791–G1890. Polar residues predominate over residues T1625–L1634. Basic and acidic residues predominate over residues S1635 to Q1654. A compositionally biased stretch (polar residues) spans G1660–A1679. A compositionally biased stretch (basic and acidic residues) spans D1791–H1815. The segment covering H1879 to A1888 has biased composition (polar residues). The ACD domain occupies V1988 to A2422. S1999–E2003 lines the ATP pocket. Mg(2+) is bound by residues E2003, E2065, and Q2149. Position 2255 (R2255) interacts with ATP. A Mg(2+)-binding site is contributed by E2326. Residues E2574–L2658 are membrane localization region (MLD). Residues E2734–L3098 are rho inactivation domain (RID). The ABH effector region stretch occupies residues V3195–A3310. A disordered region spans residues A3404–S3426. Residues G3414–S3426 are compositionally biased toward polar residues. In terms of domain architecture, Peptidase C80 spans P3462–W3646. 1D-myo-inositol hexakisphosphate contacts are provided by residues E3468–R3470, K3495–H3496, and R3526. H3532 (for cysteine protease activity) is an active-site residue. S3577 is a binding site for 1D-myo-inositol hexakisphosphate. Residue C3581 is the Nucleophile; for cysteine protease activity of the active site. 1D-myo-inositol hexakisphosphate is bound by residues S3610–R3612, R3623–K3624, K3636, and K3641.

Mg(2+) serves as cofactor.

The protein localises to the secreted. It is found in the host cytoplasm. It localises to the host cytosol. Its subcellular location is the host cell membrane. It catalyses the reaction L-lysyl-/S-(2E,6E,10E)-geranylgeranyl-L-cysteinyl-[protein] + hexadecanoyl-CoA = N(6)-hexadecanoyl-L-lysyl-/S-(2E,6E,10E)-geranylgeranyl-L-cysteinyl-[protein] + CoA + H(+). The catalysed reaction is L-lysyl-/S-(2E,6E,10E)-geranylgeranyl-L-cysteinyl-[protein] + dodecanoyl-CoA = N(6)-dodecanoyl-L-lysyl-/S-(2E,6E,10E)-geranylgeranyl-L-cysteinyl-[protein] + CoA + H(+). It carries out the reaction L-lysyl-/S-(2E,6E,10E)-geranylgeranyl-L-cysteinyl-[protein] + decanoyl-CoA = N(6)-decanoyl-L-lysyl-/S-(2E,6E,10E)-geranylgeranyl-L-cysteinyl-[protein] + CoA + H(+). Its activity is regulated as follows. Protease activity is inhibited by N-ethylmaleimide but not other protease inhibitors. Protease activity is inhibited by aza-leucine epoxide. Protease activity is activated upon binding inositol hexakisphosphate (InsP6) via an allosteric mechanism: the active site is disordered or occluded in the absence of InsP6, protecting the protease active-site sulfhydryl until the toxin enters a eukaryotic cell. Upon processing at the Leu-3441-Ala-3442 site, the peptidase C80 domain is converted to a form with much reduced affinity for InsP6, but is reactivated for high affinity binding of InsP6 by cooperative binding of both a new substrate and InsP6. Reactivation allows cleavage at other sites, specifically at Leu residues between the effector domains. Precursor of a multifunctional toxin that causes destruction of the actin cytoskeleton by covalent cross-linking of actin and inactivation of Rho GTPases when translocated into the host cytoplasm. Upon translocation into the host cell, undergoes autoprocessing in cis mediated by the peptidase C80 domain (also named CPD domain): the protease activity is activated upon binding inositol hexakisphosphate (InsP6) present at the host cell membrane and delivers the Cysteine protease domain-containing toxin F3 chain to the host cytosol. The Cysteine protease domain-containing toxin F3 chain will then further cleave and release effector toxin chains that cause disassembly of the actin cytoskeleton and enhance V.cholerae colonization of the small intestine, possibly by facilitating evasion of phagocytic cells. Functionally, following autocatalytic cleavage in cis at the Leu-3441-Ala-3442 site, this chain mediates processing in trans to release other individual toxin chains to the host cytosol. Released effector toxin chains cause disassembly of the actin cytoskeleton and enhance V.cholerae colonization of the small intestine, possibly by facilitating evasion of phagocytic cells. In terms of biological role, actin-directed toxin that catalyzes the covalent cross-linking of host cytoplasmic monomeric actin. Mediates the cross-link between 'Lys-50' of one monomer and 'Glu-270' of another actin monomer, resulting in formation of highly toxic actin oligomers that cause cell rounding. The toxin can be highly efficient at very low concentrations by acting on formin homology family proteins: toxic actin oligomers bind with high affinity to formins and adversely affect both nucleation and elongation abilities of formins, causing their potent inhibition in both profilin-dependent and independent manners. Acts as an acid--amino-acid ligase that transfers the gamma-phosphoryl group of ATP to the 'Glu-270' actin residue, resulting in the formation of an activated acyl phosphate intermediate. This intermediate is further hydrolyzed and the energy of hydrolysis is utilized for the formation of the amide bond between actin subunits. Its function is as follows. N-epsilon-fatty acyltransferase that mediates lysine-palmitoylation of host Rho GTPase proteins, with a strong preference for host Rac1. After delivery to the host cytosol, localizes to the host cell membrane where it palmitoylates host Rho GTPase proteins, resulting in loss of all active GTP-bound Rho and subsequent actin depolymerization. Prenylation of host Rac1 at the C-terminus is required for lysine-palmitoylation. Indirectly activates the small GTPase CDC42. This Vibrio cholerae serotype O1 (strain ATCC 39315 / El Tor Inaba N16961) protein is Multifunctional-autoprocessing repeats-in-toxin.